Here is a 229-residue protein sequence, read N- to C-terminus: Cilia- and flagella-associated protein 95 (229 aa).

Residues 1 to 123 (MDSLDRSCQD…LLNEETVSSG (123 aa)) are Extracellular-facing. The N-linked (GlcNAc...) asparagine glycan is linked to asparagine 75. Residues 124–140 (IIERVTGLPATGFGAVF) form a helical membrane-spanning segment. Topologically, residues 141–229 (PRHPPDWSKM…PLTSGPIVPI (89 aa)) are cytoplasmic. A mn region spans residues 153 to 163 (LTTYSEDYVPP).

As to quaternary structure, microtubule inner protein component of sperm flagellar doublet microtubules. Interacts with MYH9. Interacts with MYH10. In terms of tissue distribution, expressed in undifferentiated embryonic stem cells. Expressed in airway epithelial cells.

The protein localises to the cytoplasm. It localises to the cytoskeleton. It is found in the cilium axoneme. Its subcellular location is the flagellum axoneme. The protein resides in the cell membrane. Its function is as follows. Microtubule inner protein (MIP) part of the dynein-decorated doublet microtubules (DMTs) in cilia axoneme, which is required for motile cilia beating. The sequence is that of Cilia- and flagella-associated protein 95 from Homo sapiens (Human).